A 310-amino-acid chain; its full sequence is Beta-lactamase AST-1 (310 aa).

Residues 1–31 form the signal peptide; the sequence is MTFSALPFRRADRRRLLAAALAACALTLTAA. The N-palmitoyl cysteine moiety is linked to residue Cys32. Residue Cys32 is the site of S-diacylglycerol cysteine attachment. The active-site Acyl-ester intermediate is Ser91. Ser151 contributes to the substrate binding site. The active-site Proton acceptor is Glu187. Residue 255-257 participates in substrate binding; sequence KTG.

This sequence belongs to the class-A beta-lactamase family.

The protein localises to the cell membrane. It catalyses the reaction a beta-lactam + H2O = a substituted beta-amino acid. With respect to regulation, inhibited by clavulanic acid. In terms of biological role, confers high levels of resistance to amoxicillin, benzylpenicillin, piperacillin, ticarcillin and cephalothin. Not active against ceftazidime, cefotaxime and aztreonam. This is Beta-lactamase AST-1 (bla) from Nocardia asteroides.